We begin with the raw amino-acid sequence, 662 residues long: UvrABC system protein B (662 aa).

Residues 25-182 (KGIEKREKFQ…KKLVEIQYER (158 aa)) enclose the Helicase ATP-binding domain. 38–45 (GVTGSGKT) contacts ATP. The Beta-hairpin motif lies at 91-114 (YYDYYQPEAYVAQSDTYIEKDASI). The 167-residue stretch at 429 to 595 (QIDDLYTSIQ…TIIKDIREVI (167 aa)) folds into the Helicase C-terminal domain. A UVR domain is found at 622–657 (DKLIEKYEEEMKEAAQNLQFEKAAHLRDVIYKLKKD).

Belongs to the UvrB family. As to quaternary structure, forms a heterotetramer with UvrA during the search for lesions. Interacts with UvrC in an incision complex.

It localises to the cytoplasm. The UvrABC repair system catalyzes the recognition and processing of DNA lesions. A damage recognition complex composed of 2 UvrA and 2 UvrB subunits scans DNA for abnormalities. Upon binding of the UvrA(2)B(2) complex to a putative damaged site, the DNA wraps around one UvrB monomer. DNA wrap is dependent on ATP binding by UvrB and probably causes local melting of the DNA helix, facilitating insertion of UvrB beta-hairpin between the DNA strands. Then UvrB probes one DNA strand for the presence of a lesion. If a lesion is found the UvrA subunits dissociate and the UvrB-DNA preincision complex is formed. This complex is subsequently bound by UvrC and the second UvrB is released. If no lesion is found, the DNA wraps around the other UvrB subunit that will check the other stand for damage. This is UvrABC system protein B from Clostridium botulinum (strain Kyoto / Type A2).